We begin with the raw amino-acid sequence, 172 residues long: Adenine phosphoribosyltransferase (172 aa).

It belongs to the purine/pyrimidine phosphoribosyltransferase family. As to quaternary structure, homodimer.

The protein localises to the cytoplasm. The catalysed reaction is AMP + diphosphate = 5-phospho-alpha-D-ribose 1-diphosphate + adenine. It participates in purine metabolism; AMP biosynthesis via salvage pathway; AMP from adenine: step 1/1. Functionally, catalyzes a salvage reaction resulting in the formation of AMP, that is energically less costly than de novo synthesis. This chain is Adenine phosphoribosyltransferase, found in Staphylococcus saprophyticus subsp. saprophyticus (strain ATCC 15305 / DSM 20229 / NCIMB 8711 / NCTC 7292 / S-41).